Consider the following 292-residue polypeptide: Small ribosomal subunit biogenesis GTPase RsgA (292 aa).

Residues 64–221 (RSELFRPAVA…LVDTPGFSSL (158 aa)) enclose the CP-type G domain. Residues 113–116 (NKMD) and 164–172 (GPSGVGKST) each bind GTP. Zn(2+) is bound by residues C245, C250, H252, and C258.

The protein belongs to the TRAFAC class YlqF/YawG GTPase family. RsgA subfamily. In terms of assembly, monomer. Associates with 30S ribosomal subunit, binds 16S rRNA. Requires Zn(2+) as cofactor.

The protein resides in the cytoplasm. Its function is as follows. One of several proteins that assist in the late maturation steps of the functional core of the 30S ribosomal subunit. Helps release RbfA from mature subunits. May play a role in the assembly of ribosomal proteins into the subunit. Circularly permuted GTPase that catalyzes slow GTP hydrolysis, GTPase activity is stimulated by the 30S ribosomal subunit. The chain is Small ribosomal subunit biogenesis GTPase RsgA from Clostridium botulinum (strain 657 / Type Ba4).